We begin with the raw amino-acid sequence, 345 residues long: Beta-hexosaminidase (345 aa).

Residues aspartate 60, arginine 68, arginine 132, and 162–163 (KH) contribute to the substrate site. Histidine 175 serves as the catalytic Proton donor/acceptor. The active-site Nucleophile is aspartate 247.

The protein belongs to the glycosyl hydrolase 3 family. NagZ subfamily.

The protein localises to the cytoplasm. The enzyme catalyses Hydrolysis of terminal non-reducing N-acetyl-D-hexosamine residues in N-acetyl-beta-D-hexosaminides.. It functions in the pathway cell wall biogenesis; peptidoglycan recycling. Functionally, plays a role in peptidoglycan recycling by cleaving the terminal beta-1,4-linked N-acetylglucosamine (GlcNAc) from peptide-linked peptidoglycan fragments, giving rise to free GlcNAc, anhydro-N-acetylmuramic acid and anhydro-N-acetylmuramic acid-linked peptides. This is Beta-hexosaminidase from Actinobacillus pleuropneumoniae serotype 5b (strain L20).